Here is a 480-residue protein sequence, read N- to C-terminus: Glutamate--tRNA ligase (480 aa).

Residues 9–19 (PSPTGNLHIGT) carry the 'HIGH' region motif. Residues 250–254 (KLSKR) carry the 'KMSKS' region motif. ATP is bound at residue K253.

It belongs to the class-I aminoacyl-tRNA synthetase family. Glutamate--tRNA ligase type 1 subfamily. Monomer.

The protein resides in the cytoplasm. It catalyses the reaction tRNA(Glu) + L-glutamate + ATP = L-glutamyl-tRNA(Glu) + AMP + diphosphate. Catalyzes the attachment of glutamate to tRNA(Glu) in a two-step reaction: glutamate is first activated by ATP to form Glu-AMP and then transferred to the acceptor end of tRNA(Glu). The protein is Glutamate--tRNA ligase of Microcystis aeruginosa (strain NIES-843 / IAM M-2473).